The following is a 247-amino-acid chain: Phycocyanobilin:ferredoxin oxidoreductase (247 aa).

This sequence belongs to the HY2 family.

The catalysed reaction is (2R,3Z)-phycocyanobilin + 4 oxidized [2Fe-2S]-[ferredoxin] = biliverdin IXalpha + 4 reduced [2Fe-2S]-[ferredoxin] + 4 H(+). In terms of biological role, catalyzes the four-electron reduction of biliverdin IX-alpha (2-electron reduction at both the A and D rings); the reaction proceeds via an isolatable 2-electron intermediate, 181,182-dihydrobiliverdin. This Synechococcus sp. (strain CC9605) protein is Phycocyanobilin:ferredoxin oxidoreductase.